Here is an 88-residue protein sequence, read N- to C-terminus: U-scoloptoxin(XY)-Er1a (88 aa).

An N-terminal signal peptide occupies residues Met-1–Ser-24. The tract at residues Arg-66–Ala-88 is disordered. A propeptide spanning residues Glu-79 to Ala-88 is cleaved from the precursor.

Belongs to the scoloptoxin-XY family. Contains 3 disulfide bonds. In terms of tissue distribution, expressed by the venom gland.

It localises to the secreted. The protein is U-scoloptoxin(XY)-Er1a of Ethmostigmus rubripes (Giant centipede).